We begin with the raw amino-acid sequence, 453 residues long: Secreted triacylglycerol lipase LIP2 (453 aa).

The signal sequence occupies residues 1–19; sequence MKLSLVVLTLISVAAQALA. N-linked (GlcNAc...) asparagine glycosylation occurs at Asn-98. A disulfide bridge connects residues Cys-115 and Cys-284. The Nucleophile role is filled by Ser-197. Residue Asn-230 is glycosylated (N-linked (GlcNAc...) asparagine). Residues Asp-344 and His-378 contribute to the active site. An intrachain disulfide couples Cys-360 to Cys-406.

It belongs to the AB hydrolase superfamily. Lipase family. Class Lip subfamily.

It localises to the secreted. The enzyme catalyses a triacylglycerol + H2O = a diacylglycerol + a fatty acid + H(+). The catalysed reaction is a monoacylglycerol + H2O = glycerol + a fatty acid + H(+). It catalyses the reaction a diacylglycerol + H2O = a monoacylglycerol + a fatty acid + H(+). The activity is significantly increased in the presence of Triton X-100 and partially inhibited by PMSF but unaffected by univalent and divalent metal ions. Activity is significantly decreased in acetate buffer compared to that in citrate buffer at the same pH. Major secreted lipase involved in Dandruff and seborrheic dermatitis (D/SD) probably via lipase-mediated breakdown of sebaceous lipids and release of irritating free fatty acids. Has triacylglycerol lipase activity and is able to hydrolyze triolein, tristearin, trilinolein, tripalmitoylglycerol and trihexadecenoin. Hydrolyze diacylglycerols such as distearin, dilinolein, dipalmitoylglycerol and dipalmitolein. Shows high esterase activity against 4-nitrophenyl palmitate and 1-naphthyl palmitate but not 1-naphthyl acetate, suggesting that it specifically recognizes fatty acids. Mostly converts monoolein to di- and triolein, while free fatty acids are only produced in low amounts. This chain is Secreted triacylglycerol lipase LIP2, found in Malassezia globosa (strain ATCC MYA-4612 / CBS 7966) (Dandruff-associated fungus).